A 311-amino-acid polypeptide reads, in one-letter code: Probable manganese-dependent inorganic pyrophosphatase (311 aa).

The Mn(2+) site is built by His9, Asp13, Asp15, Asp75, His97, and Asp149.

It belongs to the PPase class C family. It depends on Mn(2+) as a cofactor.

It localises to the cytoplasm. The enzyme catalyses diphosphate + H2O = 2 phosphate + H(+). In Lactobacillus helveticus (strain DPC 4571), this protein is Probable manganese-dependent inorganic pyrophosphatase.